We begin with the raw amino-acid sequence, 529 residues long: Bifunctional purine biosynthesis protein PurH (529 aa).

In terms of domain architecture, MGS-like spans 1-148; the sequence is MQQRRPVRRA…KNHKDVAIVV (148 aa).

Belongs to the PurH family.

The enzyme catalyses (6R)-10-formyltetrahydrofolate + 5-amino-1-(5-phospho-beta-D-ribosyl)imidazole-4-carboxamide = 5-formamido-1-(5-phospho-D-ribosyl)imidazole-4-carboxamide + (6S)-5,6,7,8-tetrahydrofolate. It catalyses the reaction IMP + H2O = 5-formamido-1-(5-phospho-D-ribosyl)imidazole-4-carboxamide. It functions in the pathway purine metabolism; IMP biosynthesis via de novo pathway; 5-formamido-1-(5-phospho-D-ribosyl)imidazole-4-carboxamide from 5-amino-1-(5-phospho-D-ribosyl)imidazole-4-carboxamide (10-formyl THF route): step 1/1. Its pathway is purine metabolism; IMP biosynthesis via de novo pathway; IMP from 5-formamido-1-(5-phospho-D-ribosyl)imidazole-4-carboxamide: step 1/1. This Salmonella agona (strain SL483) protein is Bifunctional purine biosynthesis protein PurH.